The following is a 269-amino-acid chain: Zinc transporter ZupT (269 aa).

Helical transmembrane passes span 5–25 (VLLA…GSLI), 38–58 (SLAL…EIFV), 75–95 (WMTI…DKFI), 125–145 (MGIF…IATF), 158–178 (IAIA…VPIF), 190–210 (LSFL…LLLM), 212–232 (FLTD…MVFI), and 249–269 (LSMY…VLLV). Positions 137 and 140 each coordinate Fe(2+). Zn(2+) contacts are provided by E140 and H165. Positions 166, 169, and 198 each coordinate Fe(2+). E169 contributes to the Zn(2+) binding site.

Belongs to the ZIP transporter (TC 2.A.5) family. ZupT subfamily.

It localises to the cell membrane. The enzyme catalyses Zn(2+)(in) = Zn(2+)(out). Mediates zinc uptake. May also transport other divalent cations. This chain is Zinc transporter ZupT, found in Lysinibacillus sphaericus (strain C3-41).